A 145-amino-acid chain; its full sequence is Basic phospholipase A2 textilotoxin A chain (145 aa).

An N-terminal signal peptide occupies residues 1 to 19 (MHPAHLLVLLGVCVSLLGA). Residues 20–27 (SDIPPLPL) constitute a propeptide that is removed on maturation. 7 disulfide bridges follow: C38-C98, C54-C144, C56-C72, C71-C125, C78-C118, C87-C111, and C105-C116. Residues Y55, G57, and G59 each contribute to the Ca(2+) site. The active site involves H75. D76 provides a ligand contact to Ca(2+). D119 is a catalytic residue.

Belongs to the phospholipase A2 family. Group I subfamily. D49 sub-subfamily. Heterohexamer. 2 forms exist: 2 A or 2 B chains, 2 C chains and 2 covalently-linked D chains, and 1 A or 1 B, 1 C, 2 covalently-linked D chains and 2 differentially glycosylated covalently-linked D chains. Textilotoxin was originally described as pentameric. It depends on Ca(2+) as a cofactor. As to expression, expressed by the venom gland.

Its subcellular location is the secreted. It carries out the reaction a 1,2-diacyl-sn-glycero-3-phosphocholine + H2O = a 1-acyl-sn-glycero-3-phosphocholine + a fatty acid + H(+). In terms of biological role, snake venom oligomeric phospholipase A2 that has potent presynaptic neurotoxicity. Chain A possesses a very low toxicity, but is essential for neurotoxicity. Possesses a low enzymatic activity. PLA2 catalyzes the calcium-dependent hydrolysis of the 2-acyl groups in 3-sn-phosphoglycerides. This is Basic phospholipase A2 textilotoxin A chain from Pseudonaja textilis (Eastern brown snake).